Here is a 223-residue protein sequence, read N- to C-terminus: Putative PAN domain-containing protein R486 (223 aa).

Residues 1 to 23 (MSQTAIIIWIVVIIILLVLGGLG) form the signal peptide. Positions 39–73 (PTPINPPSSITPIQPINPPSSITPIQPSGPPSGGN) are disordered. Over residues 45–64 (PSSITPIQPINPPSSITPIQ) the composition is skewed to low complexity. PAN domains lie at 80–155 (CPAY…EDGC) and 159–223 (ARYN…KMPH). 2 cysteine pairs are disulfide-bonded: Cys-80–Cys-155 and Cys-109–Cys-131. 3 N-linked (GlcNAc...) asparagine; by host glycosylation sites follow: Asn-162, Asn-189, and Asn-213. Residues Cys-182 and Cys-204 are joined by a disulfide bond.

It localises to the secreted. The protein localises to the virion. The protein is Putative PAN domain-containing protein R486 of Acanthamoeba polyphaga mimivirus (APMV).